The sequence spans 397 residues: uncharacterized protein (397 aa).

This is an uncharacterized protein from Thermotoga maritima (strain ATCC 43589 / DSM 3109 / JCM 10099 / NBRC 100826 / MSB8).